The chain runs to 189 residues: dCTP deaminase (189 aa).

DCTP contacts are provided by residues 112–117 (KSTYAR), 136–138 (TLE), Q157, Y171, and Q181. E138 (proton donor/acceptor) is an active-site residue.

It belongs to the dCTP deaminase family. In terms of assembly, homotrimer.

The enzyme catalyses dCTP + H2O + H(+) = dUTP + NH4(+). The protein operates within pyrimidine metabolism; dUMP biosynthesis; dUMP from dCTP (dUTP route): step 1/2. Functionally, catalyzes the deamination of dCTP to dUTP. The sequence is that of dCTP deaminase from Xanthomonas campestris pv. campestris (strain 8004).